The following is a 224-amino-acid chain: Flagellar L-ring protein (224 aa).

Residues 1–15 (MARYLLLASTLLLAA) form the signal peptide. C16 is lipidated: N-palmitoyl cysteine. The S-diacylglycerol cysteine moiety is linked to residue C16.

Belongs to the FlgH family. In terms of assembly, the basal body constitutes a major portion of the flagellar organelle and consists of four rings (L,P,S, and M) mounted on a central rod.

Its subcellular location is the cell outer membrane. The protein resides in the bacterial flagellum basal body. Assembles around the rod to form the L-ring and probably protects the motor/basal body from shearing forces during rotation. This chain is Flagellar L-ring protein, found in Shewanella sp. (strain ANA-3).